Consider the following 263-residue polypeptide: Hydroxyethylthiazole kinase 1 (263 aa).

Residue Met-42 participates in substrate binding. 2 residues coordinate ATP: Lys-118 and Thr-164. Gly-191 contributes to the substrate binding site.

The protein belongs to the Thz kinase family. It depends on Mg(2+) as a cofactor.

The catalysed reaction is 5-(2-hydroxyethyl)-4-methylthiazole + ATP = 4-methyl-5-(2-phosphooxyethyl)-thiazole + ADP + H(+). It participates in cofactor biosynthesis; thiamine diphosphate biosynthesis; 4-methyl-5-(2-phosphoethyl)-thiazole from 5-(2-hydroxyethyl)-4-methylthiazole: step 1/1. Functionally, catalyzes the phosphorylation of the hydroxyl group of 4-methyl-5-beta-hydroxyethylthiazole (THZ). The protein is Hydroxyethylthiazole kinase 1 of Clostridium botulinum (strain Kyoto / Type A2).